We begin with the raw amino-acid sequence, 410 residues long: Cysteine desulfurase IscS (410 aa).

Pyridoxal 5'-phosphate is bound by residues A80 to T81, N160, Q188, and S208 to H210. An N6-(pyridoxal phosphate)lysine modification is found at K211. Position 248 (T248) interacts with pyridoxal 5'-phosphate. The Cysteine persulfide intermediate role is filled by C334. C334 is a binding site for [2Fe-2S] cluster.

It belongs to the class-V pyridoxal-phosphate-dependent aminotransferase family. NifS/IscS subfamily. As to quaternary structure, homodimer. Forms a heterotetramer with IscU, interacts with other sulfur acceptors. It depends on pyridoxal 5'-phosphate as a cofactor.

It localises to the cytoplasm. It carries out the reaction (sulfur carrier)-H + L-cysteine = (sulfur carrier)-SH + L-alanine. Its pathway is cofactor biosynthesis; iron-sulfur cluster biosynthesis. Master enzyme that delivers sulfur to a number of partners involved in Fe-S cluster assembly, tRNA modification or cofactor biosynthesis. Catalyzes the removal of elemental sulfur atoms from cysteine to produce alanine. Functions as a sulfur delivery protein for Fe-S cluster synthesis onto IscU, an Fe-S scaffold assembly protein, as well as other S acceptor proteins. The chain is Cysteine desulfurase IscS from Rickettsia massiliae (strain Mtu5).